The sequence spans 715 residues: D-ribulokinase YDR109C (715 aa).

The segment at 1-27 (MKSRKRQNNMQNETREPAVLSSQETSI) is disordered.

It belongs to the FGGY kinase family.

It carries out the reaction D-ribulose + ATP = D-ribulose 5-phosphate + ADP + H(+). The protein operates within carbohydrate metabolism; pentose and glucuronate interconversion. Catalyzes ATP-dependent phosphorylation of D-ribulose at C-5 to form D-ribulose 5-phosphate. Postulated to function in a metabolite repair mechanism by preventing toxic accumulation of free D-ribulose formed by non-specific phosphatase activities. Alternatively, may play a role in regulating D-ribulose 5-phosphate recycling in the pentose phosphate pathway. This Saccharomyces cerevisiae (strain ATCC 204508 / S288c) (Baker's yeast) protein is D-ribulokinase YDR109C.